The primary structure comprises 137 residues: Large ribosomal subunit protein uL16 (137 aa).

It belongs to the universal ribosomal protein uL16 family. As to quaternary structure, part of the 50S ribosomal subunit.

Its function is as follows. Binds 23S rRNA and is also seen to make contacts with the A and possibly P site tRNAs. The sequence is that of Large ribosomal subunit protein uL16 from Nitrobacter winogradskyi (strain ATCC 25391 / DSM 10237 / CIP 104748 / NCIMB 11846 / Nb-255).